The sequence spans 1004 residues: MSFFKKKLSKGKEILSKSNLKTHTSSNASLSIDDLNRFGFSLNPVLWCLDHQQGLLAIVSSTNRIYIYGKQHVQSVIVPDCSTIVHIALCAAYLIVIDSRNTVLSYPLMKHRDLSKPAATYFLKQKVTCTVTDPTIDWVFFGMSDGSVVPWDVTRHCLGKFKVPNLYVPRHEEWRMMGYSYAPVPGKLSPVVSVQIHPKDLGVILIAYPDGVVLYSIRTDEVIRFYELEYAPGSTAAVLSPHNYRRPIVKGIEWSPWGDHFVSYYTDSTFAFWDVDQEYPVQVRNFVDSNIHTYTPMQRNPPKTELEPIRSMRWCCCEDPTVSFILMLGGLPKEAPVKGISLFSYRNLPAKKDVETFAEFFANPNSQRFFPFIDIPPVRDMLVIPSSSPHYNGSHNPKNLLLLSEDNSLSLLDISTGNISNMSLSIPPSLCFLASDFRVIAFQTVTKKVWNQIEDTISVNSHYSCLFGGSPSPGYLKKLDERNLLITSTGLSLSIWDISQGFMNPSLCVNLDFSSVMRKHLTPSAFITTASFSTYNPEFSCADSFGRVIVCKRKNHKENLPAQLANGIYRLDDTLVLEGTLHAQYYIDLKRGRVTLNQMSNIGFVCIGYQDGGITIIDMRGPHILCNTSISELGLERRGKPDPDFLTSAEFVVMNPKGSPSSIYVVTGTYRGMTLLFRIDPSSSGRFSAYFESSRQLDIKNIYKICSLTQDGQIATATGSSLQSVGYPLPQEVFLVYIGDSGISVFNKINNQVGNLDWRKPVCCRAALVLSTVSKHMGSVVCVNSDLSVNWYSLPNLREERKMQLPLDIDKNRLKEGDILGNGDYIFPTLGAHELAFGCVLGSGRTLANLAPMMLITHNASHVPPRPSKSLWNWLLGEQSTSAEELDILLGGENRAESKVHTLETPKVISARPAESVKQPLTPVPSMTSQSAQSYIPPRRQQQQKGFFAQINDHLAQRGNMLGGIENTMDDLEEMSAEWANEIKDSLAGTKKDLILSGLKSYIP.

Asn-27 carries N-linked (GlcNAc...) asparagine glycosylation. 4 consecutive transmembrane segments (helical) span residues 38-58 (FGFS…LLAI), 77-97 (IVPD…LIVI), 188-208 (LSPV…LIAY), and 324-344 (FILM…SLFS). N-linked (GlcNAc...) asparagine glycosylation is found at Asn-392, Asn-418, and Asn-421. 2 helical membrane passes run 422–442 (MSLS…VIAF) and 599–619 (MSNI…IIDM). Asn-627 carries an N-linked (GlcNAc...) asparagine glycan. Transmembrane regions (helical) follow at residues 726-746 (GYPL…ISVF) and 823-843 (GDYI…VLGS). Asn-859 carries N-linked (GlcNAc...) asparagine glycosylation.

To yeast YPR031w.

It localises to the membrane. This is an uncharacterized protein from Schizosaccharomyces pombe (strain 972 / ATCC 24843) (Fission yeast).